A 700-amino-acid chain; its full sequence is DNA topoisomerase 1 (700 aa).

In terms of domain architecture, Toprim spans 3–114 (KNLIIVESPA…TLPRIVFHEI (112 aa)). Mg(2+) is bound by residues Glu9 and Asp83. The Topo IA-type catalytic domain occupies 130-553 (NMHSVNAQQT…EFYYPFMRKI (424 aa)). Residues 164–169 (SAGRVQ) form an interaction with DNA region. The active-site O-(5'-phospho-DNA)-tyrosine intermediate is the Tyr298. 3 consecutive C4-type zinc fingers follow at residues 573–599 (CPDCGGELAIRKGRFGEFVACLNFPKC), 629–656 (CPSCQKGEIVERFSKRGKFYGCSAYPKC), and 669–692 (CEECGETLVIKELKKGTFLECLKC).

The protein belongs to the type IA topoisomerase family. As to quaternary structure, monomer. The cofactor is Mg(2+).

The enzyme catalyses ATP-independent breakage of single-stranded DNA, followed by passage and rejoining.. In terms of biological role, releases the supercoiling and torsional tension of DNA, which is introduced during the DNA replication and transcription, by transiently cleaving and rejoining one strand of the DNA duplex. Introduces a single-strand break via transesterification at a target site in duplex DNA. The scissile phosphodiester is attacked by the catalytic tyrosine of the enzyme, resulting in the formation of a DNA-(5'-phosphotyrosyl)-enzyme intermediate and the expulsion of a 3'-OH DNA strand. The free DNA strand then undergoes passage around the unbroken strand, thus removing DNA supercoils. Finally, in the religation step, the DNA 3'-OH attacks the covalent intermediate to expel the active-site tyrosine and restore the DNA phosphodiester backbone. This chain is DNA topoisomerase 1, found in Campylobacter jejuni subsp. jejuni serotype O:2 (strain ATCC 700819 / NCTC 11168).